A 168-amino-acid chain; its full sequence is G/U mismatch-specific DNA glycosylase (168 aa).

This sequence belongs to the uracil-DNA glycosylase (UDG) superfamily. TDG/mug family. Binds DNA as a monomer.

The protein resides in the cytoplasm. It carries out the reaction Specifically hydrolyzes mismatched double-stranded DNA and polynucleotides, releasing free uracil.. Its function is as follows. Excises ethenocytosine and uracil, which can arise by alkylation or deamination of cytosine, respectively, from the corresponding mispairs with guanine in ds-DNA. It is capable of hydrolyzing the carbon-nitrogen bond between the sugar-phosphate backbone of the DNA and the mispaired base. The complementary strand guanine functions in substrate recognition. Required for DNA damage lesion repair in stationary-phase cells. The polypeptide is G/U mismatch-specific DNA glycosylase (Salmonella dublin (strain CT_02021853)).